Here is a 1077-residue protein sequence, read N- to C-terminus: Bifunctional helicase and thymine dioxygenase JBP2 (1077 aa).

Positions 1-516 (MPMFMDGASQ…PPLCIPFKIA (516 aa)) are thymine dioxygenase. Residues His391, Asp393, and His441 each contribute to the Fe cation site. Arg455 lines the 2-oxoglutarate pocket. The segment at 517 to 1075 (KTLSLTQHAA…RNIDTVKSER (559 aa)) is DNA Helicase. The 176-residue stretch at 531–706 (SRRIKEGDGC…YRLVGWVDDK (176 aa)) folds into the Helicase ATP-binding domain. 544 to 551 (LTMGLGKT) contributes to the ATP binding site. A DEAH box motif is present at residues 657–660 (DEGH). The Helicase C-terminal domain occupies 871-1032 (KLTALISILH…QVVPGHDLVD (162 aa)).

It in the C-terminal section; belongs to the SNF2/RAD54 helicase family. The protein in the N-terminal section; belongs to the TET family. JBP2 subfamily. It depends on Fe(2+) as a cofactor.

It is found in the nucleus. The enzyme catalyses ATP + H2O = ADP + phosphate + H(+). It carries out the reaction thymine + 2-oxoglutarate + O2 = 5-hydroxymethyluracil + succinate + CO2. Its function is as follows. Dioxygenase that catalyzes the first step of DNA base J (beta-d-glucosyl-HOMedU) biosynthesis by converting thymine to 5-hydroxymethyluracil (HOMedU). DNA base J is a hypermodified thymidine residue found in the genome of kinetoplastid parasites, which is localized primarily to repetitive DNA, namely the telomeres, and is implicated in the regulation of antigenic variation. Probably also acts as a DNA helicase. Recognizes and binds specific regions of the genome, hydrolyzes ATP and allows the DNA base J de novo synthesis. Involved in initial synthesis of DNA base J, JBP1 being able to act via the basal level of DNA base J and propagate further synthesis. In contrast to JBP1, it does not specifically bind DNA base J, however it binds chromatin. This is Bifunctional helicase and thymine dioxygenase JBP2 (JBP2) from Trypanosoma brucei brucei (strain 927/4 GUTat10.1).